A 510-amino-acid polypeptide reads, in one-letter code: Coatomer subunit delta (510 aa).

Residues 270 to 510 (MESVHMKIEE…TFLVDKYEIL (241 aa)) enclose the MHD domain.

The protein belongs to the adaptor complexes medium subunit family. Delta-COP subfamily. As to quaternary structure, oligomeric complex that consists of at least the alpha, beta, beta', gamma, delta, epsilon and zeta subunits.

The protein localises to the cytoplasm. It is found in the golgi apparatus membrane. Its subcellular location is the cytoplasmic vesicle. It localises to the COPI-coated vesicle membrane. Its function is as follows. The coatomer is a cytosolic protein complex that binds to dilysine motifs and reversibly associates with Golgi non-clathrin-coated vesicles, which further mediate biosynthetic protein transport from the ER, via the Golgi up to the trans Golgi network. Coatomer complex is required for budding from Golgi membranes, and is essential for the retrograde Golgi-to-ER transport of dilysine-tagged proteins. In mammals, the coatomer can only be recruited by membranes associated to ADP-ribosylation factors (ARFs), which are small GTP-binding proteins; the complex also influences the Golgi structural integrity, as well as the processing, activity, and endocytic recycling of LDL receptors. In Gallus gallus (Chicken), this protein is Coatomer subunit delta (ARCN1).